An 844-amino-acid chain; its full sequence is Protein translocase subunit SecA 1 (844 aa).

Residues Q91, 109 to 113 (GEGKT), and D498 each bind ATP. Basic and acidic residues predominate over residues 793 to 813 (KSKSFGEAKHVTAEDGKEKAK). The tract at residues 793 to 825 (KSKSFGEAKHVTAEDGKEKAKPQPIVKGDQVGR) is disordered. Positions 829, 831, 840, and 841 each coordinate Zn(2+).

The protein belongs to the SecA family. As to quaternary structure, monomer and homodimer. Part of the essential Sec protein translocation apparatus which comprises SecA, SecYEG and auxiliary proteins SecDF. Other proteins may also be involved. Requires Zn(2+) as cofactor.

Its subcellular location is the cell membrane. The protein localises to the cytoplasm. It carries out the reaction ATP + H2O + cellular proteinSide 1 = ADP + phosphate + cellular proteinSide 2.. Part of the Sec protein translocase complex. Interacts with the SecYEG preprotein conducting channel. Has a central role in coupling the hydrolysis of ATP to the transfer of proteins into and across the cell membrane, serving as an ATP-driven molecular motor driving the stepwise translocation of polypeptide chains across the membrane. The polypeptide is Protein translocase subunit SecA 1 (Staphylococcus epidermidis (strain ATCC 35984 / DSM 28319 / BCRC 17069 / CCUG 31568 / BM 3577 / RP62A)).